The following is a 401-amino-acid chain: Methionyl-tRNA formyltransferase, mitochondrial (401 aa).

A mitochondrion-targeting transit peptide spans 1 to 26; it reads MVKMRRITPTRLLFTCRYISNNASPP. (6R)-10-formyltetrahydrofolate is bound by residues 18–20 and 66–70; these read YIS and VVTRS.

Belongs to the Fmt family. In terms of processing, phosphorylated by GCN2 in response to nutrient deprivation. Phosphorylation mediates retention of FMT1 in the cytoplasm.

The protein resides in the mitochondrion. Its subcellular location is the mitochondrion matrix. It localises to the cytoplasm. The enzyme catalyses L-methionyl-tRNA(fMet) + (6R)-10-formyltetrahydrofolate = N-formyl-L-methionyl-tRNA(fMet) + (6S)-5,6,7,8-tetrahydrofolate + H(+). Formylates methionyl-tRNA in mitochondria and the cytoplasm. Responsible for the formylation of the 8 N-terminally formylated (Nt-formylated) mitochondrial matrix proteins that are encoded by mitochondrial DNA. Nt-formylated proteins in the cytoplasm are strongly up-regulated in stationary phase or upon starvation for specific amino acids (His or Lys) and are targeted for degradation by a PSH1 E3 ubiquitin ligase-mediated fMet/N-end rule pathway. Increased Nt-formylation of cytosolic proteins appears to be important for adaptation to these stresses. Stationary phase-degraded Nt-formylated proteins include histone H3-like centromeric protein CSE4, Mediator complex subunit 3 (PGD1) and small ribosomal subunit protein uS8-A (RPS22A). The protein is Methionyl-tRNA formyltransferase, mitochondrial (FMT1) of Saccharomyces cerevisiae (strain ATCC 204508 / S288c) (Baker's yeast).